The sequence spans 30 residues: GLPVCGETCFGGTCNTPGCICDPWPVCTRN.

Positions 1–30 (GLPVCGETCFGGTCNTPGCICDPWPVCTRN) form a cross-link, cyclopeptide (Gly-Asn). 3 disulfides stabilise this stretch: Cys5–Cys19, Cys9–Cys21, and Cys14–Cys27.

This is a cyclic peptide.

Probably participates in a plant defense mechanism. The chain is Cycloviolacin-H3 from Viola hederacea (Australian violet).